A 208-amino-acid chain; its full sequence is Peptidyl-tRNA hydrolase (208 aa).

TRNA is bound at residue Y19. H24 (proton acceptor) is an active-site residue. TRNA-binding residues include F71, N73, and N119.

It belongs to the PTH family. As to quaternary structure, monomer.

It is found in the cytoplasm. The catalysed reaction is an N-acyl-L-alpha-aminoacyl-tRNA + H2O = an N-acyl-L-amino acid + a tRNA + H(+). In terms of biological role, hydrolyzes ribosome-free peptidyl-tRNAs (with 1 or more amino acids incorporated), which drop off the ribosome during protein synthesis, or as a result of ribosome stalling. Functionally, catalyzes the release of premature peptidyl moieties from peptidyl-tRNA molecules trapped in stalled 50S ribosomal subunits, and thus maintains levels of free tRNAs and 50S ribosomes. The polypeptide is Peptidyl-tRNA hydrolase (Synechococcus elongatus (strain ATCC 33912 / PCC 7942 / FACHB-805) (Anacystis nidulans R2)).